Consider the following 367-residue polypeptide: Probable trehalose-phosphate phosphatase 4 (367 aa).

Belongs to the trehalose phosphatase family. The cofactor is a divalent metal cation.

The catalysed reaction is alpha,alpha-trehalose 6-phosphate + H2O = alpha,alpha-trehalose + phosphate. It functions in the pathway glycan biosynthesis; trehalose biosynthesis. In terms of biological role, removes the phosphate from trehalose 6-phosphate to produce free trehalose. Trehalose accumulation in plant may improve abiotic stress tolerance. The polypeptide is Probable trehalose-phosphate phosphatase 4 (TPP4) (Oryza sativa subsp. japonica (Rice)).